We begin with the raw amino-acid sequence, 593 residues long: Polyphenol oxidase, chloroplastic (593 aa).

Positions 1–13 (MTSLSPPVVTTPT) are enriched in low complexity. The tract at residues 1-34 (MTSLSPPVVTTPTVPNPATKPLSPFSQNNSQVSL) is disordered. The transit peptide at 1 to 89 (MTSLSPPVVT…GMGTDPFAFA (89 aa)) directs the protein to the chloroplast. Polar residues predominate over residues 24 to 34 (PFSQNNSQVSL). 2 disulfide bridges follow: Cys-100-Cys-115 and Cys-114-Cys-176. Cu cation is bound by residues His-175, His-196, His-205, His-327, His-331, and His-361. Positions 179-196 (CDGAYDQVGFPELELQIH) form a cross-link, 2'-(S-cysteinyl)-histidine (Cys-His).

It belongs to the tyrosinase family. Cu(2+) is required as a cofactor.

It localises to the plastid. It is found in the chloroplast thylakoid lumen. It catalyses the reaction 2 catechol + O2 = 2 1,2-benzoquinone + 2 H2O. Functionally, catalyzes the oxidation of mono- and o-diphenols to o-diquinones. The protein is Polyphenol oxidase, chloroplastic of Malus domestica (Apple).